The chain runs to 176 residues: Adenine phosphoribosyltransferase (176 aa).

Belongs to the purine/pyrimidine phosphoribosyltransferase family. In terms of assembly, homodimer.

It is found in the cytoplasm. The catalysed reaction is AMP + diphosphate = 5-phospho-alpha-D-ribose 1-diphosphate + adenine. The protein operates within purine metabolism; AMP biosynthesis via salvage pathway; AMP from adenine: step 1/1. In terms of biological role, catalyzes a salvage reaction resulting in the formation of AMP, that is energically less costly than de novo synthesis. This chain is Adenine phosphoribosyltransferase, found in Thermobifida fusca (strain YX).